The primary structure comprises 111 residues: CRIB domain-containing protein RIC2 (111 aa).

Residues 71-84 form the CRIB domain; sequence IGFPTDVKHLSHIG.

In terms of assembly, interacts with ARAC11/ROP1. In terms of tissue distribution, expressed in roots, leaves, stems, flowers, siliques and pollen.

The protein resides in the cell membrane. Its function is as follows. Functions as a downstream effector of Rho-related GTP binding proteins of the 'Rho of Plants' (ROPs) family. Participates in the propagation of ROP GTPase signals in specific cellular responses. Is involved in pollen tube growth regulation through its interaction with ARAC11/ROP1. The protein is CRIB domain-containing protein RIC2 (RIC2) of Arabidopsis thaliana (Mouse-ear cress).